A 370-amino-acid chain; its full sequence is MSTTTVITPGTITREKNENGAPLYPDYMPFYDPLEKVEDIGAFEHFDPGHRADPKLPNLLKNATKVWELSPHVGTEIHGVQLSQLDSAGLDELALLAAQRGALVFRDQDFVNIGFDAQKKLVSHFGPLHIHGWAPHPAAGSEEHMIIYDHKDDLRVRQSWAGRSPVQWHTDQSPEQQPPGTTFIAMLESPTTAGGDTLVSSSVRAYSSLSPRFRKRLEGLTAIHTNNDGVSQELKHGQQAVMRRGVLQAEHPVVLVHPVTKQKALYVNPVYTKKIVGFDQEESDCILKFLFDHIAKRQDFSCRIRYEAGTVLVWDQRVTNHSQTLDYPIGDRRHGFRLTPLANKPIPAKIEEDDEEFSTDDARHLVGNAS.

Residues 1–12 (MSTTTVITPGTI) show a composition bias toward low complexity. A disordered region spans residues 1-20 (MSTTTVITPGTITREKNENG). Substrate is bound at residue histidine 131. Positions 169 and 171 each coordinate Fe cation. Threonine 197 is a binding site for 2-oxoglutarate. Histidine 321 contacts Fe cation. The 2-oxoglutarate site is built by arginine 333 and arginine 337. Arginine 337 is a substrate binding site.

It belongs to the TfdA dioxygenase family. Fe(2+) is required as a cofactor.

It functions in the pathway alkaloid biosynthesis. Its function is as follows. Alpha-ketoglutarate-dependent dioxygenase; part of the gene cluster that mediates the biosynthesis of communesins, a prominent class of indole alkaloids with great potential as pharmaceuticals. Communesins are biosynthesized by the coupling of tryptamine and aurantioclavine, two building blocks derived from L-tryptophan. The L-tryptophan decarboxylase cnsB converts L-tryptophan to tryptamine, whereas the tryptophan dimethylallyltransferase cnsF converts L-tryptophan to 4-dimethylallyl tryptophan which is further transformed to aurantioclavine by the aurantioclavine synthase cnsA, probably aided by the catalase cnsD. The cytochrome P450 monooxygenase cnsC catalyzes the heterodimeric coupling between the two different indole moieties, tryptamine and aurantioclavine, to construct vicinal quaternary stereocenters and yield the heptacyclic communesin scaffold. The O-methyltransferase cnsE then methylates the communesin scaffold to produce communesin K, the simplest characterized communesin that contains the heptacyclic core. The dioxygenase cnsJ converts communesin K into communesin I. Acylation to introduce the hexadienyl group at position N16 of communesin I by the acyltransferase cnsK leads to the production of communesin B. The hexadienyl group is produced by the highly reducing polyketide synthase cnsI, before being hydrolytically removed from cnsI by the serine hydrolase cnsH, converted into hexadienyl-CoA by the CoA ligase cnsG, and then transferred to communesin I by cnsK. Surprisingly, cnsK may also be a promiscuous acyltransferase that can tolerate a range of acyl groups, including acetyl-, propionyl-, and butyryl-CoA, which lead to communesins A, G and H respectively. The roles of the alpha-ketoglutarate-dependent dioxygenases cnsM and cnsP have still to be determined. This is Alpha-ketoglutarate-dependent dioxygenase cnsP from Penicillium expansum (Blue mold rot fungus).